The following is a 99-amino-acid chain: Protein RnfH (99 aa).

This sequence belongs to the UPF0125 (RnfH) family.

The polypeptide is Protein RnfH (Tolumonas auensis (strain DSM 9187 / NBRC 110442 / TA 4)).